The chain runs to 775 residues: Mitochondrial intermediate peptidase (775 aa).

The N-terminal 28 residues, Met1–His28, are a transit peptide targeting the mitochondrion. Position 558 (His558) interacts with Zn(2+). Residue Glu559 is part of the active site. His562 and His565 together coordinate Zn(2+).

This sequence belongs to the peptidase M3 family. It depends on Zn(2+) as a cofactor.

Its subcellular location is the mitochondrion matrix. The catalysed reaction is Release of an N-terminal octapeptide as second stage of processing of some proteins imported into the mitochondrion.. Its function is as follows. Cleaves proteins, imported into the mitochondrion, to their mature size. While most mitochondrial precursor proteins are processed to the mature form in one step by mitochondrial processing peptidase (MPP), the sequential cleavage by MIP of an octapeptide after initial processing by MPP is a required step for a subgroup of nuclear-encoded precursor proteins destined for the matrix or the inner membrane. The protein is Mitochondrial intermediate peptidase (OCT1) of Schizophyllum commune (Split gill fungus).